Consider the following 196-residue polypeptide: Small ribosomal subunit protein uS4c (196 aa).

Residues 16–36 are disordered; the sequence is GALPGLTRKTPKSGSNLKKKF. Positions 89 to 169 constitute an S4 RNA-binding domain; the sequence is MRLDNILFRL…LPKHLTIDTL (81 aa).

This sequence belongs to the universal ribosomal protein uS4 family. As to quaternary structure, part of the 30S ribosomal subunit. Contacts protein S5. The interaction surface between S4 and S5 is involved in control of translational fidelity.

Its subcellular location is the plastid. The protein localises to the chloroplast. Its function is as follows. One of the primary rRNA binding proteins, it binds directly to 16S rRNA where it nucleates assembly of the body of the 30S subunit. Functionally, with S5 and S12 plays an important role in translational accuracy. This chain is Small ribosomal subunit protein uS4c (rps4), found in Cinna latifolia (Drooping woodreed).